Here is a 316-residue protein sequence, read N- to C-terminus: MADAVNSNSKEEAAQLPDGVSSVIPGWFSEISPMWPGEAHSLKVEKILFQGKSDYQNVMVFQSSTYGKVLVLDGVIQLTERDECAYQEMIAHLPLCSIPSPKKVLVIGGGDGGVLREVARHLSVEQIDICEIDKMVVDVSKQFFPDVAVGFEDPRVVLHIGDGVAFLKAVPEGTYDAIIVDSSDPIGPAQELFEKPFFESVAKALRPGGVVCTQAESIWLHMHIIEDIVANCRQIFKGSVNYAWTTVPTYPSGVIGFMLCSTEGPPVDFKHPINPIDANDGRSKTMKPLKFYNSEIHSAAFCLPSFAKKVIDSKAN.

In terms of domain architecture, PABS spans 25-262 (PGWFSEISPM…GVIGFMLCST (238 aa)). S-adenosyl 3-(methylsulfanyl)propylamine is bound at residue Gln-56. Tyr-86 serves as a coordination point for putrescine. S-adenosyl 3-(methylsulfanyl)propylamine contacts are provided by residues Gln-87, Asp-111, Glu-131, 162–163 (DG), and Asp-181. Catalysis depends on Asp-181, which acts as the Proton acceptor. Putrescine is bound by residues 181–184 (DSSD) and Tyr-250.

This sequence belongs to the spermidine/spermine synthase family.

It carries out the reaction S-adenosyl 3-(methylsulfanyl)propylamine + putrescine = S-methyl-5'-thioadenosine + spermidine + H(+). It participates in amine and polyamine biosynthesis; spermidine biosynthesis; spermidine from putrescine: step 1/1. The polypeptide is Spermidine synthase (Coffea arabica (Arabian coffee)).